Here is a 361-residue protein sequence, read N- to C-terminus: Aromatic amino acid aminotransferase (361 aa).

Residue Lys-221 is modified to N6-(pyridoxal phosphate)lysine.

This sequence belongs to the class-II pyridoxal-phosphate-dependent aminotransferase family. Homodimer. It depends on pyridoxal 5'-phosphate as a cofactor.

It carries out the reaction an aromatic L-alpha-amino acid + 2-oxoglutarate = an aromatic oxo-acid + L-glutamate. Functionally, aminotransferase that catalyzes the conversion of aromatic amino acids and 2-oxoglutarate into corresponding aromatic oxo acids and L-glutamate. The sequence is that of Aromatic amino acid aminotransferase from Mycobacterium marinum (strain ATCC BAA-535 / M).